The chain runs to 772 residues: uncharacterized protein (772 aa).

The next 2 membrane-spanning stretches (helical) occupy residues 16–36 (LITF…LFSY) and 301–321 (IGWI…LFSW). The HTH araC/xylS-type domain maps to 670-768 (DNIIHIIHHE…GITPGNYRQQ (99 aa)). 2 DNA-binding regions (H-T-H motif) span residues 687 to 708 (DEIA…KKEM) and 735 to 758 (VKDI…KKLE).

The protein resides in the cell membrane. This is an uncharacterized protein from Bacillus subtilis (strain 168).